We begin with the raw amino-acid sequence, 118 residues long: Large ribosomal subunit protein bL19 (118 aa).

It belongs to the bacterial ribosomal protein bL19 family.

Its function is as follows. This protein is located at the 30S-50S ribosomal subunit interface and may play a role in the structure and function of the aminoacyl-tRNA binding site. The sequence is that of Large ribosomal subunit protein bL19 from Frankia casuarinae (strain DSM 45818 / CECT 9043 / HFP020203 / CcI3).